The chain runs to 177 residues: Large ribosomal subunit protein uL6 (177 aa).

The protein belongs to the universal ribosomal protein uL6 family. In terms of assembly, part of the 50S ribosomal subunit.

This protein binds to the 23S rRNA, and is important in its secondary structure. It is located near the subunit interface in the base of the L7/L12 stalk, and near the tRNA binding site of the peptidyltransferase center. The protein is Large ribosomal subunit protein uL6 of Bradyrhizobium diazoefficiens (strain JCM 10833 / BCRC 13528 / IAM 13628 / NBRC 14792 / USDA 110).